The primary structure comprises 373 residues: Alcohol dehydrogenase class-3 (373 aa).

Position 1 is an N-acetylalanine (A1). Positions 44, 66, 96, 99, 102, 110, and 173 each coordinate Zn(2+).

This sequence belongs to the zinc-containing alcohol dehydrogenase family. Class-III subfamily. As to quaternary structure, homodimer. Zn(2+) serves as cofactor.

The protein resides in the cytoplasm. It carries out the reaction a primary alcohol + NAD(+) = an aldehyde + NADH + H(+). It catalyses the reaction a secondary alcohol + NAD(+) = a ketone + NADH + H(+). The catalysed reaction is S-(hydroxymethyl)glutathione + NADP(+) = S-formylglutathione + NADPH + H(+). The enzyme catalyses S-(hydroxymethyl)glutathione + NAD(+) = S-formylglutathione + NADH + H(+). It carries out the reaction S-nitrosoglutathione + NADH + H(+) = S-(hydroxysulfenamide)glutathione + NAD(+). Its function is as follows. Class-III ADH is remarkably ineffective in oxidizing ethanol, but it readily catalyzes the oxidation of long-chain primary alcohols and the oxidation of S-(hydroxymethyl) glutathione. Also acts as a S-nitroso-glutathione reductase by catalyzing the NADH-dependent reduction of S-nitrosoglutathione, thereby regulating protein S-nitrosylation. This Saara hardwickii (Indian spiny-tailed lizard) protein is Alcohol dehydrogenase class-3.